A 270-amino-acid chain; its full sequence is Maximins-S type D (270 aa).

An N-terminal signal peptide occupies residues 1-18 (MNFNYFILVLFFITSGHA). 2 consecutive propeptides follow at residues 19 to 35 (KSET…HIKR) and 52 to 65 (SAEE…LVTR). Residue Asn-83 is modified to Asparagine amide. Positions 87-100 (SAEEQDLAEDLVTR) are excised as a propeptide. Lys-118 carries the lysine amide modification. Positions 122-135 (SAEDQDLAEDLVTR) are excised as a propeptide. Residue Asn-153 is modified to Asparagine amide. A propeptide spanning residues 157–170 (SAEEQDLAEHLVTR) is cleaved from the precursor. Position 188 is an asparagine amide (Asn-188). The propeptide occupies 192–205 (SAEEQDLVEDLVTR). Position 223 is a lysine amide (Lys-223). Positions 227–240 (SAEEQDLAEDLVTR) are excised as a propeptide. Position 258 is a lysine amide (Lys-258). Positions 262 to 270 (SAEQEKDMK) are excised as a propeptide.

The protein belongs to the maximin-S family. As to expression, expressed by the skin dorsal glands.

Its subcellular location is the secreted. In terms of biological role, maximin-S1 has no antimicrobial activity. Has no hemolytic activity. Maximin-S2 has an activity against mycoplasma but has no activity against common Gram-positive and Gram-negative bacteria nor fungi. Has no hemolytic activity. Its function is as follows. Maximin-S3 has an activity against mycoplasma but has no activity against common Gram-positive and Gram-negative bacteria nor fungi. Has no hemolytic activity. Functionally, maximin-S4 has an activity against mycoplasma but has no activity against common Gram-positive and Gram-negative bacteria nor fungi. Has no hemolytic activity. In terms of biological role, maximin-S5 has an activity against mycoplasma but has no activity against common Gram-positive and Gram-negative bacteria nor fungi. Has no hemolytic activity. The polypeptide is Maximins-S type D (Bombina maxima (Giant fire-bellied toad)).